A 244-amino-acid polypeptide reads, in one-letter code: MALFRGMWGVLRTLGRTGVEMCAGCGGRIPSPVSLICIPKCFSSLGNYPKKPMSSYLRFSTEQLPKFKAKHPDAKVSELIRKIAAMWRELPEAEKKVYEADFKAEWKVYKEAVSKYKEQLTPSQLMGLEKEARQKRLKKKAQIKRRELILLGKPKRPRSAYNIYVSESFQEAKDESAQGKLKLVNQAWKNLSHDEKQAYIQLAKDDRIRYDNEMKSWEEQMAEVGRSDLIRRSVKRPPGDISEN.

The transit peptide at 1–42 directs the protein to the mitochondrion; the sequence is MALFRGMWGVLRTLGRTGVEMCAGCGGRIPSPVSLICIPKCF. A DNA-binding region (HMG box 1) is located at residues 49–117; the sequence is PKKPMSSYLR…VYKEAVSKYK (69 aa). Phosphoserine; by PKA is present on residues serine 54, serine 55, and serine 60. At lysine 66 the chain carries N6-succinyllysine. Threonine 121 is modified (phosphothreonine). Residues 154–218 constitute a DNA-binding region (HMG box 2); it reads PKRPRSAYNI…RYDNEMKSWE (65 aa). Residue serine 159 is modified to Phosphoserine; by PKA. At serine 192 the chain carries Phosphoserine. Residues 221 to 244 are disordered; sequence MAEVGRSDLIRRSVKRPPGDISEN.

Monomer; binds DNA as a monomer. Homodimer. Component of the mitochondrial transcription initiation complex, composed at least of TFB2M, TFAM and POLRMT. In this complex TFAM recruits POLRMT to the promoter whereas TFB2M induces structural changes in POLRMT to enable promoter opening and trapping of the DNA non-template strand. Upon metabolic stress, forms a complex composed of FOXO3, SIRT3, TFAM and POLRMT. Interacts with TFB1M and TFB2M. Interacts with CLPX; this enhances DNA-binding. In terms of processing, phosphorylation by PKA within the HMG box 1 impairs DNA binding and promotes degradation by the AAA+ Lon protease. The mitochondrial isoform is widely expressed while the nuclear isoform is testis-specific.

It localises to the mitochondrion. The protein resides in the mitochondrion matrix. The protein localises to the mitochondrion nucleoid. It is found in the nucleus. In terms of biological role, binds to the mitochondrial light strand promoter and functions in mitochondrial transcription regulation. Component of the mitochondrial transcription initiation complex, composed at least of TFB2M, TFAM and POLRMT that is required for basal transcription of mitochondrial DNA. In this complex, TFAM recruits POLRMT to a specific promoter whereas TFB2M induces structural changes in POLRMT to enable promoter opening and trapping of the DNA non-template strand. Required for accurate and efficient promoter recognition by the mitochondrial RNA polymerase. Promotes transcription initiation from the HSP1 and the light strand promoter by binding immediately upstream of transcriptional start sites. Is able to unwind DNA. Bends the mitochondrial light strand promoter DNA into a U-turn shape via its HMG boxes. Required for maintenance of normal levels of mitochondrial DNA. May play a role in organizing and compacting mitochondrial DNA. Its function is as follows. May also function as a transcriptional activator or may have a structural role in the compaction of nuclear DNA during spermatogenesis. The protein is Transcription factor A, mitochondrial of Rattus norvegicus (Rat).